We begin with the raw amino-acid sequence, 72 residues long: Translation initiation factor IF-1 (72 aa).

An S1-like domain is found at 1-72 (MTKEEAIEVD…SRGRIMFRER (72 aa)).

It belongs to the IF-1 family. As to quaternary structure, component of the 30S ribosomal translation pre-initiation complex which assembles on the 30S ribosome in the order IF-2 and IF-3, IF-1 and N-formylmethionyl-tRNA(fMet); mRNA recruitment can occur at any time during PIC assembly.

The protein localises to the cytoplasm. Functionally, one of the essential components for the initiation of protein synthesis. Stabilizes the binding of IF-2 and IF-3 on the 30S subunit to which N-formylmethionyl-tRNA(fMet) subsequently binds. Helps modulate mRNA selection, yielding the 30S pre-initiation complex (PIC). Upon addition of the 50S ribosomal subunit IF-1, IF-2 and IF-3 are released leaving the mature 70S translation initiation complex. The polypeptide is Translation initiation factor IF-1 (Treponema pallidum (strain Nichols)).